A 159-amino-acid polypeptide reads, in one-letter code: Transcription elongation factor GreA (159 aa).

The stretch at 47 to 73 (AEYDAAREEQSLTEAHIADLENKLSTA) forms a coiled coil.

Belongs to the GreA/GreB family.

Functionally, necessary for efficient RNA polymerase transcription elongation past template-encoded arresting sites. The arresting sites in DNA have the property of trapping a certain fraction of elongating RNA polymerases that pass through, resulting in locked ternary complexes. Cleavage of the nascent transcript by cleavage factors such as GreA or GreB allows the resumption of elongation from the new 3'terminus. GreA releases sequences of 2 to 3 nucleotides. This Chlorobium phaeobacteroides (strain DSM 266 / SMG 266 / 2430) protein is Transcription elongation factor GreA.